Reading from the N-terminus, the 328-residue chain is Stress response kinase A (328 aa).

Aspartate 201 (proton acceptor) is an active-site residue. Mg(2+) contacts are provided by asparagine 206 and aspartate 217. Aspartate 217 is a catalytic residue.

This sequence belongs to the SrkA/RdoA protein kinase family. Monomer. Mg(2+) is required as a cofactor.

The protein localises to the cytoplasm. The catalysed reaction is L-seryl-[protein] + ATP = O-phospho-L-seryl-[protein] + ADP + H(+). It catalyses the reaction L-threonyl-[protein] + ATP = O-phospho-L-threonyl-[protein] + ADP + H(+). In terms of biological role, a protein kinase that phosphorylates Ser and Thr residues. Probably acts to suppress the effects of stress linked to accumulation of reactive oxygen species. Probably involved in the extracytoplasmic stress response. This is Stress response kinase A from Escherichia coli O6:H1 (strain CFT073 / ATCC 700928 / UPEC).